Here is a 421-residue protein sequence, read N- to C-terminus: UDP-N-acetylglucosamine 1-carboxyvinyltransferase 1 (421 aa).

Residue 22 to 23 (KN) coordinates phosphoenolpyruvate. Arginine 95 lines the UDP-N-acetyl-alpha-D-glucosamine pocket. Cysteine 119 functions as the Proton donor in the catalytic mechanism. Cysteine 119 carries the 2-(S-cysteinyl)pyruvic acid O-phosphothioketal modification. Residues 124–128 (RPIEQ), aspartate 308, and valine 330 contribute to the UDP-N-acetyl-alpha-D-glucosamine site.

It belongs to the EPSP synthase family. MurA subfamily.

It is found in the cytoplasm. It catalyses the reaction phosphoenolpyruvate + UDP-N-acetyl-alpha-D-glucosamine = UDP-N-acetyl-3-O-(1-carboxyvinyl)-alpha-D-glucosamine + phosphate. It functions in the pathway cell wall biogenesis; peptidoglycan biosynthesis. In terms of biological role, cell wall formation. Adds enolpyruvyl to UDP-N-acetylglucosamine. The sequence is that of UDP-N-acetylglucosamine 1-carboxyvinyltransferase 1 from Staphylococcus epidermidis (strain ATCC 35984 / DSM 28319 / BCRC 17069 / CCUG 31568 / BM 3577 / RP62A).